We begin with the raw amino-acid sequence, 237 residues long: Ras modification protein ERF4 (237 aa).

This sequence belongs to the ERF4 family. Interacts with ERF2.

It is found in the endoplasmic reticulum membrane. The ERF2-SHR5 complex is a palmitoyltransferase specific for Ras proteins. Palmitoylates RAS2, which is required for its proper plasma membrane localization. In Saccharomyces cerevisiae (strain ATCC 204508 / S288c) (Baker's yeast), this protein is Ras modification protein ERF4 (SHR5).